The primary structure comprises 673 residues: Auxin response factor 9 (673 aa).

A DNA-binding region (TF-B3) is located at residues 126–228 (FCKTLTASDT…ELRVGVRRLM (103 aa)). 2 disordered regions span residues 356–386 (ELEP…PSVV) and 514–545 (DSDQ…QSRQ). Residues 516-545 (DQISQPSNGNKSDAPGTSSERSPLESQSRQ) are compositionally biased toward polar residues. Residues 547 to 639 (RSCTKVIMQG…EEAKLLAPKS (93 aa)) enclose the PB1 domain.

Belongs to the ARF family. In terms of assembly, homodimers and heterodimers. As to expression, expressed in roots, culms, leaves and young panicles.

It localises to the nucleus. Its function is as follows. Auxin response factors (ARFs) are transcriptional factors that bind specifically to the DNA sequence 5'-TGTCTC-3' found in the auxin-responsive promoter elements (AuxREs). The sequence is that of Auxin response factor 9 (ARF9) from Oryza sativa subsp. japonica (Rice).